A 486-amino-acid polypeptide reads, in one-letter code: MPLHLYNTLSRRLEPFSPLHPERVTIYACGVTVYDYCHLGHARSYVAWDVLRRYLTFLGYTVHYVQNFTDIDDKILRRAYENGETMATVSDRYIAAYHQDMAALNILPASAYPRATEVIPEIINLIQGLLDRGYAYVAGGDVYYAVAQFPSYGKLSGRQLEQLMAGASGRIEEEEEQRKRHPLDFALWKAAKPEEMSVYHPWEAPWGKGRPGWHIECSAMVRQAFGATVDIHCGGMDLIFPHHENEIAQSEAVTQQPLARFWLHNGFVTVNTEKMSKSLGNFTTIRDLLAQGLDPMALRLLVLQAQYRKPLDFTPEALTAAAKGWQTLGEALHLHQQIPLPPIDAAEVRSHPKTEAFCQAMDEDLNTAAALAVIFELAKTLNREQHRYLHGGGWGRSPAEVSRDWHTLVTLAQVLGLEAKEESNPALTVELTDEEIQALIAARTAARQAKNYTESDRLRDLLLAQGVKLVDQKDGTTHWFRVPSAP.

Cys29 serves as a coordination point for Zn(2+). The 'HIGH' region signature appears at 31–41; that stretch reads VTVYDYCHLGH. The Zn(2+) site is built by Cys217, His242, and Glu246. The 'KMSKS' region signature appears at 274 to 278; the sequence is KMSKS. Residue Lys277 participates in ATP binding.

It belongs to the class-I aminoacyl-tRNA synthetase family. In terms of assembly, monomer. The cofactor is Zn(2+).

The protein localises to the cytoplasm. The catalysed reaction is tRNA(Cys) + L-cysteine + ATP = L-cysteinyl-tRNA(Cys) + AMP + diphosphate. The polypeptide is Cysteine--tRNA ligase (Thermosynechococcus vestitus (strain NIES-2133 / IAM M-273 / BP-1)).